The following is a 907-amino-acid chain: MDTSRVRMLLSLLALLQLVAAGSPPRPDTMPRGCPSYCHCELDGRMLLRVDCSDLGLSELPSNLSVFTSYLDLSMNNISQLPASLLHRLRFLEELRLAGNALTHIPKGAFAGLHSLKVLMLQNNQLRQVPEEALQNLRSLQSLRLDANHISYVPPSCFSGLHSLRHLWLDDNALTDVPVQAFRSLSALQAMTLALNKIHHIADHAFGNLSSLVVLHLHNNRIHSLGKKCFDGLHSLETLDLNYNNLDEFPTAIKTLSNLKELGFHSNNIRSIPERAFVGNPSLITIHFYDNPIQFVGISAFQHLPELRTLTLNGASQITEFPDLTGTATLESLTLTGAKISSLPQTVCDQLPNLQVLDLSYNLLEDLPSLSGCQKLQKIDLRHNEIYEIKGGTFQQLFNLRSLNLARNKIAIIHPNAFSTLPSLIKLDLSSNLLSSFPVTGLHGLTHLKLTGNRALQSLIPSANFPELKIIEMPYAYQCCAFGGCENVYKIPNQWNKDDSSSVDDLRKKDAGLFQVQDERDLEDFLLDFEEDLKVLHSVQCSPPPGPFKPCEHLFGSWLIRIGVWTTAVLALSCNALVAFTVFRTPLYISSIKLLIGVIAVVDILMGVSSAILAVVDTFTFGSFAQHGAWWEGGIGCQIVGFLSIFASESSVFLLTLAALERGFSVKCSSKFEMKAPLSSLKAIILLCVLLALTIATVPLLGGSEYNASPLCLPLPFGEPSTTGYMVALVLLNSLCFLIMTIAYTRLYCSLEKGELENLWDCSMVKHTALLLFTNCILYCPVAFLSFSSLLNLTFISPEVIKFILLVIVPLPACLNPLLYIVFNPHFKEDMGSLGKQTRFWTRAKHPSLLSINSDDVEKRSCDSTQALVSFTHASIAYDLPSDSGSSPAYPMTESCHLSSVAFVPCL.

The N-terminal stretch at 1 to 21 is a signal peptide; the sequence is MDTSRVRMLLSLLALLQLVAA. At 22–561 the chain is on the extracellular side; it reads GSPPRPDTMP…EHLFGSWLIR (540 aa). Positions 33 to 64 constitute an LRRNT domain; it reads GCPSYCHCELDGRMLLRVDCSDLGLSELPSNL. 2 cysteine pairs are disulfide-bonded: Cys34–Cys40 and Cys38–Cys52. LRR repeat units lie at residues 44–64, 65–88, 89–112, 114–136, 137–160, 162–184, 186–208, 209–232, 233–256, 257–279, 281–303, 304–327, 328–350, 351–375, 377–396, 397–420, and 422–444; these read GRML…PSNL, SVFT…LLHR, LRFL…AFAG, HSLK…ALQN, LRSL…CFSG, HSLR…AFRS, SALQ…AFGN, LSSL…CFDG, LHSL…IKTL, SNLK…AFVG, PSLI…AFQH, LPEL…LTGT, ATLE…VCDQ, LPNL…GCQK, QKID…TFQQ, LFNL…AFST, and PSLI…GLHG. Asn63 and Asn77 each carry an N-linked (GlcNAc...) asparagine glycan. Asn208 carries N-linked (GlcNAc...) asparagine glycosylation. A disulfide bridge connects residues Cys348 and Cys373. An intrachain disulfide couples Cys479 to Cys541. A helical membrane pass occupies residues 562–582; sequence IGVWTTAVLALSCNALVAFTV. Residues 564–585 form an LRR 18 repeat; it reads VWTTAVLALSCNALVAFTVFRT. Over 583-595 the chain is Cytoplasmic; that stretch reads FRTPLYISSIKLL. The chain crosses the membrane as a helical span at residues 596–616; the sequence is IGVIAVVDILMGVSSAILAVV. Over 617-638 the chain is Extracellular; the sequence is DTFTFGSFAQHGAWWEGGIGCQ. Cys637 and Cys712 are oxidised to a cystine. A helical transmembrane segment spans residues 639–659; the sequence is IVGFLSIFASESSVFLLTLAA. Over 660–682 the chain is Cytoplasmic; sequence LERGFSVKCSSKFEMKAPLSSLK. Residues 683–703 traverse the membrane as a helical segment; sequence AIILLCVLLALTIATVPLLGG. Residues 704-723 are Extracellular-facing; it reads SEYNASPLCLPLPFGEPSTT. The helical transmembrane segment at 724 to 744 threads the bilayer; it reads GYMVALVLLNSLCFLIMTIAY. Over 745–775 the chain is Cytoplasmic; that stretch reads TRLYCSLEKGELENLWDCSMVKHTALLLFTN. Residues 776–796 form a helical membrane-spanning segment; that stretch reads CILYCPVAFLSFSSLLNLTFI. Residues 797 to 802 lie on the Extracellular side of the membrane; the sequence is SPEVIK. A helical transmembrane segment spans residues 803–823; that stretch reads FILLVIVPLPACLNPLLYIVF. At 824–907 the chain is on the cytoplasmic side; it reads NPHFKEDMGS…LSSVAFVPCL (84 aa).

Belongs to the G-protein coupled receptor 1 family. As to quaternary structure, identified in a complex composed of RNF43, LGR5 and RSPO1. Also interacts with other R-spondin ligands, including RSPO2, RSPO3 and RSPO4.

Its subcellular location is the cell membrane. The protein resides in the golgi apparatus. The protein localises to the trans-Golgi network membrane. Its function is as follows. Receptor for R-spondins that potentiates the canonical Wnt signaling pathway and acts as a stem cell marker of the intestinal epithelium and the hair follicle. Upon binding to R-spondins (RSPO1, RSPO2, RSPO3 or RSPO4), associates with phosphorylated LRP6 and frizzled receptors that are activated by extracellular Wnt receptors, triggering the canonical Wnt signaling pathway to increase expression of target genes. In contrast to classical G-protein coupled receptors, does not activate heterotrimeric G-proteins to transduce the signal. Involved in the development and/or maintenance of the adult intestinal stem cells during postembryonic development. This is Leucine-rich repeat-containing G-protein coupled receptor 5 (Lgr5) from Rattus norvegicus (Rat).